The sequence spans 649 residues: MPHSGLLKSPVPFLPGTSPSADGPDSFSCMFEAIMESHRAKGTSYSSLASLEALASPGPTQSPFFTFEMPPQPPAPRPDPPAPAPLAPLEPDSGTSSVADGPWTQRREVEESDAGATLAPRKELPSPSHSEDSLGLGAAPLGSEPPLSQLVSDSDSELDSTERLALGSTDTLSNGQKADLEAAQRLAKRLYRLDGFRKADVARHLGKNNDFSKLVAGEYLKFFVFTGMTLDQALRVFLKELALMGETQERERVLAHFSQRYFQCNPEALSSEDGAHTLTCALMLLNTDLHGHNIGKRMTCGDFIGNLEGLNDGGDFPRELLKALYSSIKNEKLQWAIDEEELRRSLSELADPNPKVIKRVSGGSGSSSSPFLDLTPEPGAAVYKHGALVRKVHADPDCRKTPRGKRGWKSFHGILKGMILYLQKEEYQPGKALSEAELKNAISIHHALATRASDYSKRPHVFYLRTADWRVFLFQAPSLEQMQSWITRINVVAAMFSAPPFPAAVSSQKKFSRPLLPSAATRLSQEEQVRTHEAKLKAMASELREHRAAHLGKKARGKEAEEQRQKETYLEFEKSRYGTYAALLRVKMKAASEELDAIEAALAQAGSTEEGCPPPHSSPSLQPNPTSQPRAQRPGSEARAGAGSTRPKP.

Disordered stretches follow at residues 1 to 22 (MPHS…PSAD) and 57 to 161 (PGPT…LDST). Residues 70 to 88 (PPQPPAPRPDPPAPAPLAP) show a composition bias toward pro residues. Positions 120 to 132 (PRKELPSPSHSED) are enriched in basic and acidic residues. The 195-residue stretch at 137-331 (GAAPLGSEPP…KALYSSIKNE (195 aa)) folds into the SEC7 domain. Ser-345 bears the Phosphoserine mark. Positions 381–494 (AVYKHGALVR…WITRINVVAA (114 aa)) constitute a PH domain. Coiled coils occupy residues 523–549 (LSQE…HRAA) and 581–608 (AALL…AGST). The tract at residues 601–649 (ALAQAGSTEEGCPPPHSSPSLQPNPTSQPRAQRPGSEARAGAGSTRPKP) is disordered. A compositionally biased stretch (polar residues) spans 618–630 (SPSLQPNPTSQPR).

It belongs to the PSD family. As to quaternary structure, interacts with ACTN1. Interacts (ARF6-bound form) with KCNK1; does not interact with KCNK1 in the absence of ARF6. In terms of tissue distribution, brain. Expressed in the hippocampal and dentate neuronal layers, cerebellar cortex, molecular layer of the hippocampus and dentate gyrus.

It is found in the cell membrane. Its subcellular location is the cell projection. The protein resides in the ruffle membrane. It localises to the cleavage furrow. In terms of biological role, guanine nucleotide exchange factor for ARF6. Induces cytoskeletal remodeling. This Rattus norvegicus (Rat) protein is PH and SEC7 domain-containing protein 1 (Psd).